We begin with the raw amino-acid sequence, 201 residues long: 3-isopropylmalate dehydratase small subunit (201 aa).

The protein belongs to the LeuD family. LeuD type 1 subfamily. Heterodimer of LeuC and LeuD.

It carries out the reaction (2R,3S)-3-isopropylmalate = (2S)-2-isopropylmalate. Its pathway is amino-acid biosynthesis; L-leucine biosynthesis; L-leucine from 3-methyl-2-oxobutanoate: step 2/4. Its function is as follows. Catalyzes the isomerization between 2-isopropylmalate and 3-isopropylmalate, via the formation of 2-isopropylmaleate. In Shewanella baltica (strain OS223), this protein is 3-isopropylmalate dehydratase small subunit.